Consider the following 492-residue polypeptide: Catalase (492 aa).

Active-site residues include His65 and Asn138. Tyr348 provides a ligand contact to heme.

Belongs to the catalase family. Homotetramer. The cofactor is heme.

Its subcellular location is the cytoplasm. The protein localises to the cytosol. It is found in the peroxisome matrix. The enzyme catalyses 2 H2O2 = O2 + 2 H2O. In terms of biological role, catalyzes the degradation of hydrogen peroxide (H(2)O(2)) generated by peroxisomal oxidases to water and oxygen, thereby protecting cells from the toxic effects of hydrogen peroxide. This is Catalase from Soldanella alpina (Alpine snowbell).